The following is a 441-amino-acid chain: Glutamate-1-semialdehyde 2,1-aminomutase (441 aa).

Lys-273 is subject to N6-(pyridoxal phosphate)lysine.

This sequence belongs to the class-III pyridoxal-phosphate-dependent aminotransferase family. HemL subfamily. Requires pyridoxal 5'-phosphate as cofactor.

The protein resides in the cytoplasm. It catalyses the reaction (S)-4-amino-5-oxopentanoate = 5-aminolevulinate. Its pathway is porphyrin-containing compound metabolism; protoporphyrin-IX biosynthesis; 5-aminolevulinate from L-glutamyl-tRNA(Glu): step 2/2. The sequence is that of Glutamate-1-semialdehyde 2,1-aminomutase from Pyrobaculum calidifontis (strain DSM 21063 / JCM 11548 / VA1).